A 144-amino-acid chain; its full sequence is 3-hydroxyacyl-[acyl-carrier-protein] dehydratase FabZ (144 aa).

The active site involves H48.

This sequence belongs to the thioester dehydratase family. FabZ subfamily.

Its subcellular location is the cytoplasm. It catalyses the reaction a (3R)-hydroxyacyl-[ACP] = a (2E)-enoyl-[ACP] + H2O. In terms of biological role, involved in unsaturated fatty acids biosynthesis. Catalyzes the dehydration of short chain beta-hydroxyacyl-ACPs and long chain saturated and unsaturated beta-hydroxyacyl-ACPs. In Listeria innocua serovar 6a (strain ATCC BAA-680 / CLIP 11262), this protein is 3-hydroxyacyl-[acyl-carrier-protein] dehydratase FabZ.